A 180-amino-acid chain; its full sequence is 5'(3')-deoxyribonucleotidase (180 aa).

Residue D9 is the Nucleophile of the active site. D9, D11, and D134 together coordinate Mg(2+). D11 acts as the Proton donor in catalysis.

This sequence belongs to the 5'(3')-deoxyribonucleotidase family. The cofactor is Mg(2+).

Its function is as follows. Dephosphorylates nucleoside monophosphates such as the 5' and 2'(3')-phosphates of deoxyribonucleotides in vitro. The chain is 5'(3')-deoxyribonucleotidase from Clostridium acetobutylicum (strain ATCC 824 / DSM 792 / JCM 1419 / IAM 19013 / LMG 5710 / NBRC 13948 / NRRL B-527 / VKM B-1787 / 2291 / W).